The chain runs to 373 residues: MACSNLTTMWVSSKPSLSADSSSLSFRSVLKCPTNTSSPPSRASSVSPLQASLRELRDRIDSVKNTQKITEAMKLVAAAKVRRAQEAVVNGRPFSETLVEVLYNINEQLQTDDVDVPLTKVRPVKKVALVVVTGDRGLCGGFNNFIIKKAEARIKELKGLGLEYTVISVGKKGNSYFLRRPYIPVDKYLEAGTLPTAKEAQAVADDVFSLFISEEVDKVELLYTKFVSLVKSEPVIHTLLPLSPKGEICDINGTCVDAAEDEFFRLTTKEGKLTVERETFRTPTADFSPILQFEQDPVQILDALLPLYLNSQILRALQESLASELAARMSAMSSASDNASDLKKSLSMVYNRKRQAKITGEILEIVAGANAQV.

A chloroplast-targeting transit peptide spans 1–50; it reads MACSNLTTMWVSSKPSLSADSSSLSFRSVLKCPTNTSSPPSRASSVSPLQ. Cys139 is an active-site residue. A disulfide bridge links Cys249 with Cys255. Ser347 carries the post-translational modification Phosphoserine.

It belongs to the ATPase gamma chain family. In terms of assembly, F-type ATPases have 2 components, CF(1) - the catalytic core - and CF(0) - the membrane proton channel. CF(1) has five subunits: alpha(3), beta(3), gamma(1), delta(1), epsilon(1). CF(0) has four main subunits: a, b, b' and c. Interacts with PAB.

The protein localises to the plastid. It localises to the chloroplast thylakoid membrane. In terms of biological role, produces ATP from ADP in the presence of a proton gradient across the membrane. The gamma chain is believed to be important in regulating ATPase activity and the flow of protons through the CF(0) complex. This is ATP synthase gamma chain 1, chloroplastic (ATPC1) from Arabidopsis thaliana (Mouse-ear cress).